The primary structure comprises 122 residues: Large ribosomal subunit protein uL18 (122 aa).

The protein belongs to the universal ribosomal protein uL18 family. Part of the 50S ribosomal subunit; part of the 5S rRNA/L5/L18/L25 subcomplex. Contacts the 5S and 23S rRNAs.

Functionally, this is one of the proteins that bind and probably mediate the attachment of the 5S RNA into the large ribosomal subunit, where it forms part of the central protuberance. The sequence is that of Large ribosomal subunit protein uL18 from Lachnoclostridium phytofermentans (strain ATCC 700394 / DSM 18823 / ISDg) (Clostridium phytofermentans).